A 505-amino-acid polypeptide reads, in one-letter code: Lysine--tRNA ligase (505 aa).

Glu-415 and Glu-422 together coordinate Mg(2+).

This sequence belongs to the class-II aminoacyl-tRNA synthetase family. Homodimer. Mg(2+) is required as a cofactor.

The protein localises to the cytoplasm. It carries out the reaction tRNA(Lys) + L-lysine + ATP = L-lysyl-tRNA(Lys) + AMP + diphosphate. This Shigella boydii serotype 4 (strain Sb227) protein is Lysine--tRNA ligase.